The chain runs to 372 residues: 18-hydroxynorfluorocurarine reductase (372 aa).

Zn(2+) contacts are provided by Cys-47, Asp-50, His-69, Glu-70, Cys-100, Cys-103, Cys-106, Cys-114, and Cys-172. NADP(+)-binding positions include 197 to 202, Lys-226, 283 to 285, Ser-307, and Arg-354; these read GLGGIG and LGA.

Belongs to the zinc-containing alcohol dehydrogenase family. As to quaternary structure, homodimer. Requires Zn(2+) as cofactor. As to expression, mainly expressed in roots.

It carries out the reaction (19E)-cur-19-en-17-al + NADP(+) = norfluorocurarine + NADPH + H(+). The enzyme catalyses 17,18-epoxy-17-hydroxycur-19-ene + NADP(+) = 18-hydroxynorfluorocurarine + NADPH + H(+). The protein operates within alkaloid biosynthesis. Functionally, alcohol dehydrogenase involved in the biosynthesis of curare monoterpene indole alkaloids (MIAs), natural products such as strychnine, a neurotoxic compound used as a pesticide to control rodents, and its pharmacologically active derivatives, including brucine, used to regulate blood pressure. Curare alkaloids act as animal glycine receptor antagonists. Catalyzes the conversion of norfluorocurarine to desoxy Wieland-Gumlich aldehyde, and of 18-OH norfluorocurarine to Wieland-Gumlich aldehyde. This chain is 18-hydroxynorfluorocurarine reductase, found in Strychnos nux-vomica (Poison nut).